A 140-amino-acid chain; its full sequence is TPT1-like protein (140 aa).

In terms of domain architecture, TCTP spans 6 to 140; the sequence is MITYWDLISH…LANFKNYQKT (135 aa).

It belongs to the TCTP family.

The polypeptide is TPT1-like protein (Homo sapiens (Human)).